Reading from the N-terminus, the 252-residue chain is Phosphate import ATP-binding protein PstB (252 aa).

In terms of domain architecture, ABC transporter spans 6-247 (MSIRDLNFYY…PAQKATEDYI (242 aa)). 38-45 (GPSGCGKS) serves as a coordination point for ATP.

It belongs to the ABC transporter superfamily. Phosphate importer (TC 3.A.1.7) family. As to quaternary structure, the complex is composed of two ATP-binding proteins (PstB), two transmembrane proteins (PstC and PstA) and a solute-binding protein (PstS).

It localises to the cell inner membrane. It carries out the reaction phosphate(out) + ATP + H2O = ADP + 2 phosphate(in) + H(+). Its function is as follows. Part of the ABC transporter complex PstSACB involved in phosphate import. Responsible for energy coupling to the transport system. This chain is Phosphate import ATP-binding protein PstB, found in Psychrobacter cryohalolentis (strain ATCC BAA-1226 / DSM 17306 / VKM B-2378 / K5).